Reading from the N-terminus, the 316-residue chain is tRNA dimethylallyltransferase (316 aa).

Gly-19–Thr-26 lines the ATP pocket. Thr-21–Thr-26 provides a ligand contact to substrate. 3 interaction with substrate tRNA regions span residues Asp-44–Leu-47, Gln-168–Arg-172, and Arg-249–Arg-254.

The protein belongs to the IPP transferase family. In terms of assembly, monomer. Mg(2+) serves as cofactor.

It carries out the reaction adenosine(37) in tRNA + dimethylallyl diphosphate = N(6)-dimethylallyladenosine(37) in tRNA + diphosphate. Its function is as follows. Catalyzes the transfer of a dimethylallyl group onto the adenine at position 37 in tRNAs that read codons beginning with uridine, leading to the formation of N6-(dimethylallyl)adenosine (i(6)A). The chain is tRNA dimethylallyltransferase from Colwellia psychrerythraea (strain 34H / ATCC BAA-681) (Vibrio psychroerythus).